The chain runs to 314 residues: uncharacterized protein (314 aa).

The disordered stretch occupies residues 1–70; sequence MAGNSQRRGA…QGRHKKTDDT (70 aa). The span at 44–65 shows a compositional bias: basic residues; the sequence is RPHHPAGKRAAKAARQAQGRHK. S-adenosyl-L-methionine contacts are provided by G265, I285, and L294.

This sequence belongs to the class IV-like SAM-binding methyltransferase superfamily. RNA methyltransferase TrmH family.

This is an uncharacterized protein from Mycolicibacterium gilvum (strain PYR-GCK) (Mycobacterium gilvum (strain PYR-GCK)).